Reading from the N-terminus, the 31-residue chain is Cytochrome b6-f complex subunit 6 (31 aa).

Residues 4–24 traverse the membrane as a helical segment; that stretch reads VVSYLGILAAFALVTIGIFLV.

The protein belongs to the PetL family. The 4 large subunits of the cytochrome b6-f complex are cytochrome b6, subunit IV (17 kDa polypeptide, PetD), cytochrome f and the Rieske protein, while the 4 small subunits are PetG, PetL, PetM and PetN. The complex functions as a dimer.

It is found in the plastid. It localises to the chloroplast thylakoid membrane. In terms of biological role, component of the cytochrome b6-f complex, which mediates electron transfer between photosystem II (PSII) and photosystem I (PSI), cyclic electron flow around PSI, and state transitions. PetL is important for photoautotrophic growth as well as for electron transfer efficiency and stability of the cytochrome b6-f complex. In Mesostigma viride (Green alga), this protein is Cytochrome b6-f complex subunit 6.